Here is a 235-residue protein sequence, read N- to C-terminus: Putative N-acetylmannosamine-6-phosphate 2-epimerase (235 aa).

The protein belongs to the NanE family.

The catalysed reaction is an N-acyl-D-glucosamine 6-phosphate = an N-acyl-D-mannosamine 6-phosphate. The protein operates within amino-sugar metabolism; N-acetylneuraminate degradation; D-fructose 6-phosphate from N-acetylneuraminate: step 3/5. Its function is as follows. Converts N-acetylmannosamine-6-phosphate (ManNAc-6-P) to N-acetylglucosamine-6-phosphate (GlcNAc-6-P). The chain is Putative N-acetylmannosamine-6-phosphate 2-epimerase from Aliivibrio fischeri (strain ATCC 700601 / ES114) (Vibrio fischeri).